The sequence spans 205 residues: Urease accessory protein UreG (205 aa).

GTP is bound at residue 14–21 (GPVGSGKT).

In terms of assembly, homodimer. UreD, UreF and UreG form a complex that acts as a GTP-hydrolysis-dependent molecular chaperone, activating the urease apoprotein by helping to assemble the nickel containing metallocenter of UreC. The UreE protein probably delivers the nickel.

It localises to the cytoplasm. Activation of apourease within the UreDFG-apoprotein complex is inhibited by zinc, copper and cobalt. Its function is as follows. Facilitates the functional incorporation of the urease nickel metallocenter. This process requires GTP hydrolysis, probably effectuated by UreG. In Klebsiella aerogenes (Enterobacter aerogenes), this protein is Urease accessory protein UreG.